The sequence spans 143 residues: Large ribosomal subunit protein uL11 (143 aa).

This sequence belongs to the universal ribosomal protein uL11 family. As to quaternary structure, part of the ribosomal stalk of the 50S ribosomal subunit. Interacts with L10 and the large rRNA to form the base of the stalk. L10 forms an elongated spine to which L12 dimers bind in a sequential fashion forming a multimeric L10(L12)X complex. In terms of processing, one or more lysine residues are methylated.

Its function is as follows. Forms part of the ribosomal stalk which helps the ribosome interact with GTP-bound translation factors. This chain is Large ribosomal subunit protein uL11, found in Rhizobium etli (strain CIAT 652).